Consider the following 853-residue polypeptide: MSTIENLTAHTPMMQQYLKLKAQHPEILLFYRMGDFYELFYDDAKRASQLLDISLTKRGASAGEPIPMAGIPHHAVENYLAKLVNQGESVAICEQIGDPATSKGPVERKVVRIVTPGTISDEALLQERQDNLLAAIWQDSKGYGYAALDISSGRFRLSEPADRETMAAELQRTNPAELLYAEDFAEMALIDGRRGLRRRPLWEFEIDTARQQLNLQFGTRDLIGFGVENAPRGLCAAGCLLQYVKDTQRTTLPHIRSITMERQQDSIIMDAATRRNLEITQNLAGGVENTLAAVLDSTVTPMGSRMLKRWLHMPVRDTNVLVSRQQTIGALQDRFTELQPVLRQVGDLERILARLALRTARPRDLARMRHAFQQLPTLRAQLAEVNSTPVQKLRETMGEFTELCELLERAVVEAPPVLVRDGGVIAPGYHEELDEWRALADGATDYLDKLEIRERERLGLDTLKVGYNAIHGYYIQISRGQSHHAPIHYVRRQTLKNAERYIIPELKEYEDKVLTSKGKALALEKQLYEELFDMLMPHLADLQASASALAELDVLINLAERADTLNYACPTFIDKPGIRITEGRHPVVEQVLREPFIANPLNLSPQRRMLIITGPNMGGKSTYMRQTALIALLAYIGSYVPAQKVEIGPIDRIFTRVGAADDLASGRSTFMVEMTETANILHNATENSLVLMDEIGRGTSTYDGLSLAWACAESLANKIKALTLFATHYFELTQLPEKMEGVANVHLDALEHGDTIAFMHTVQDGAASKSYGLAVAALAGVPKEVIKRARQKLRELESLSPNAAATQVDGSQMSLLMPAEETSPAMEALENLDPDSLTPRQALEWIYRLKNLV.

Residue 614 to 621 (GPNMGGKS) coordinates ATP.

This sequence belongs to the DNA mismatch repair MutS family.

Its function is as follows. This protein is involved in the repair of mismatches in DNA. It is possible that it carries out the mismatch recognition step. This protein has a weak ATPase activity. The chain is DNA mismatch repair protein MutS from Enterobacter sp. (strain 638).